We begin with the raw amino-acid sequence, 443 residues long: Glutamate-1-semialdehyde 2,1-aminomutase (443 aa).

Residue K272 is modified to N6-(pyridoxal phosphate)lysine.

Belongs to the class-III pyridoxal-phosphate-dependent aminotransferase family. HemL subfamily. Homodimer. The cofactor is pyridoxal 5'-phosphate.

Its subcellular location is the cytoplasm. The catalysed reaction is (S)-4-amino-5-oxopentanoate = 5-aminolevulinate. The protein operates within porphyrin-containing compound metabolism; protoporphyrin-IX biosynthesis; 5-aminolevulinate from L-glutamyl-tRNA(Glu): step 2/2. It functions in the pathway porphyrin-containing compound metabolism; chlorophyll biosynthesis. This Chloroflexus aurantiacus (strain ATCC 29366 / DSM 635 / J-10-fl) protein is Glutamate-1-semialdehyde 2,1-aminomutase.